Here is a 147-residue protein sequence, read N- to C-terminus: Large ribosomal subunit protein uL15 (147 aa).

The interval 1–59 (MKLYELKPAPGSKKNRKRVGRGESSGHGKTSTRGHKGQWARSGGGVRPGFEGGQMPLTR) is disordered. A compositionally biased stretch (gly residues) spans 42-52 (SGGGVRPGFEG).

Belongs to the universal ribosomal protein uL15 family. Part of the 50S ribosomal subunit.

Its function is as follows. Binds to the 23S rRNA. The chain is Large ribosomal subunit protein uL15 from Caldicellulosiruptor bescii (strain ATCC BAA-1888 / DSM 6725 / KCTC 15123 / Z-1320) (Anaerocellum thermophilum).